The chain runs to 335 residues: Holliday junction branch migration complex subunit RuvB (335 aa).

Positions 1 to 183 are large ATPase domain (RuvB-L); sequence MDERIISSET…FGVIDHLEFY (183 aa). ATP is bound by residues Leu-22, Arg-23, Gly-64, Lys-67, Thr-68, Thr-69, 130–132, Arg-173, Tyr-183, and Arg-220; that span reads EDY. Thr-68 serves as a coordination point for Mg(2+). The interval 184–254 is small ATPAse domain (RuvB-S); that stretch reads TEEQLTEIVL…LAKEALTLLQ (71 aa). Residues 257 to 335 are head domain (RuvB-H); that stretch reads PRGLDTIDQK…HLGISYEKEV (79 aa). DNA contacts are provided by Arg-293, Arg-312, and Arg-317.

The protein belongs to the RuvB family. Homohexamer. Forms an RuvA(8)-RuvB(12)-Holliday junction (HJ) complex. HJ DNA is sandwiched between 2 RuvA tetramers; dsDNA enters through RuvA and exits via RuvB. An RuvB hexamer assembles on each DNA strand where it exits the tetramer. Each RuvB hexamer is contacted by two RuvA subunits (via domain III) on 2 adjacent RuvB subunits; this complex drives branch migration. In the full resolvosome a probable DNA-RuvA(4)-RuvB(12)-RuvC(2) complex forms which resolves the HJ.

It is found in the cytoplasm. The enzyme catalyses ATP + H2O = ADP + phosphate + H(+). Its function is as follows. The RuvA-RuvB-RuvC complex processes Holliday junction (HJ) DNA during genetic recombination and DNA repair, while the RuvA-RuvB complex plays an important role in the rescue of blocked DNA replication forks via replication fork reversal (RFR). RuvA specifically binds to HJ cruciform DNA, conferring on it an open structure. The RuvB hexamer acts as an ATP-dependent pump, pulling dsDNA into and through the RuvAB complex. RuvB forms 2 homohexamers on either side of HJ DNA bound by 1 or 2 RuvA tetramers; 4 subunits per hexamer contact DNA at a time. Coordinated motions by a converter formed by DNA-disengaged RuvB subunits stimulates ATP hydrolysis and nucleotide exchange. Immobilization of the converter enables RuvB to convert the ATP-contained energy into a lever motion, pulling 2 nucleotides of DNA out of the RuvA tetramer per ATP hydrolyzed, thus driving DNA branch migration. The RuvB motors rotate together with the DNA substrate, which together with the progressing nucleotide cycle form the mechanistic basis for DNA recombination by continuous HJ branch migration. Branch migration allows RuvC to scan DNA until it finds its consensus sequence, where it cleaves and resolves cruciform DNA. The protein is Holliday junction branch migration complex subunit RuvB of Listeria innocua serovar 6a (strain ATCC BAA-680 / CLIP 11262).